Reading from the N-terminus, the 694-residue chain is Junctophilin-2 (694 aa).

The Cytoplasmic portion of the chain corresponds to 1–672 (MSGGRFDFDD…EVEVEEVPNT (672 aa)). MORN repeat units follow at residues 14-36 (YCGG…KGQG), 38-59 (YSGS…SGNT), 60-79 (FEGY…TKGR), 82-104 (YKGE…SSGA), 106-128 (YEGT…DGGT), and 129-151 (YQGQ…PYGM). Phosphoserine is present on residues Ser162 and Ser165. Disordered stretches follow at residues 164 to 192 (SSLR…ALPS) and 231 to 278 (RAES…AAPF). Low complexity predominate over residues 176–189 (APDSPASPAADGPA). Positions 235 to 244 (RTSVGSQRSR) are enriched in polar residues. Residues 250–267 (SDLSSGASDAASTASLGE) show a composition bias toward low complexity. MORN repeat units follow at residues 290 to 312 (YMGE…SGLR) and 313 to 335 (YEGE…DGHR). Residues 350–364 (KRRVLPLKSNKVRQK) carry the Bipartite nuclear localization signal motif. Phosphoserine occurs at positions 445, 447, and 466. Positions 448-663 (LLEPPDRGAA…KEAAQAAEAE (216 aa)) are disordered. Residues 467 to 476 (PQLHERETPR) show a composition bias toward basic and acidic residues. The residue at position 474 (Thr474) is a Phosphothreonine. The segment covering 478–491 (EGGPPSPAGTPPQP) has biased composition (pro residues). Ser483 carries the phosphoserine modification. At Thr487 the chain carries Phosphothreonine. The Nuclear localization signal signature appears at 492–496 (KRPRP). Residues 522 to 540 (SRPATPAAAGAGRRSPARP) are compositionally biased toward low complexity. 4 positions are modified to phosphoserine: Ser536, Ser542, Ser596, and Ser600. Low complexity predominate over residues 589–610 (PEAADPDSAPASPATAPGQAPA). The helical; Anchor for type IV membrane protein transmembrane segment at 673 to 693 (VLICMVILLNIGLAILFVHLL) threads the bilayer.

Belongs to the junctophilin family. Interacts with TRPC3. Interacts with BAG5 and HSPA8; the interaction with HSPA8 is increased in the presence of BAG5. Junctophilin-2 N-terminal fragment: Interacts with MEF2C. In terms of processing, proteolytically cleaved by calpain in response to cardiac stress. The major cleavage site takes place at the C-terminus and leads to the release of the Junctophilin-2 N-terminal fragment chain (JP2NT). Post-translationally, phosphorylation on Ser-165, probably by PKC, affects RYR1-mediated calcium ion release, interaction with TRPC3, and skeletal muscle myotubule development.

Its subcellular location is the cell membrane. It localises to the sarcoplasmic reticulum membrane. The protein resides in the endoplasmic reticulum membrane. It is found in the nucleus. Its function is as follows. Membrane-binding protein that provides a structural bridge between the plasma membrane and the sarcoplasmic reticulum and is required for normal excitation-contraction coupling in cardiomyocytes. Provides a structural foundation for functional cross-talk between the cell surface and intracellular Ca(2+) release channels by maintaining the 12-15 nm gap between the sarcolemma and the sarcoplasmic reticulum membranes in the cardiac dyads. Necessary for proper intracellular Ca(2+) signaling in cardiac myocytes via its involvement in ryanodine receptor-mediated calcium ion release. Contributes to the construction of skeletal muscle triad junctions. Transcription repressor required to safeguard against the deleterious effects of cardiac stress. Generated following cleavage of the Junctophilin-2 chain by calpain in response to cardiac stress in cardiomyocytes. Following cleavage and release from the membrane, translocates to the nucleus, binds DNA and represses expression of genes implicated in cell growth and differentiation, hypertrophy, inflammation and fibrosis. Modifies the transcription profile and thereby attenuates pathological remodeling in response to cardiac stress. Probably acts by competing with MEF2 transcription factors and TATA-binding proteins. The sequence is that of Junctophilin-2 (JPH2) from Oryctolagus cuniculus (Rabbit).